The sequence spans 446 residues: MARTGLQRHRGKLLGTGAVLGGLVVAGVVAAVAAKRWVRRQQQRLSEQHYVREQIKRRFTQTQQDALYTMYELVPVLALVLGKELDVEELVETLKGKKLKRAGEDDEQGSGGHASAGEGSVSSTVARSKAELWQELKMRSAVKLLAVVYTTCMLLLLTRLQLNILARREYLETAIRVAKGEEATRRDAAGWLGAVWEYGAAALGALGPRPAVTAVEPVDQHEETRYVNEQAFLSLSWWLLNRGWLQFKPLIERQVEQQFGTLSPRDTLSMEQFSARLSNTIHAVNRELFDSDSRALLLRALLPDATEELHVLQQTLDEGSLRVIERDDSMLRELLQETCRCAESTASLIVLESLVNESFQFVMQQLETKVTKKLRKPATDAPEADGAADAPSQKFQVALYSVALKDCCQEMLKNGLVSMNNEYLQDLDAVPELDDLSASVYSNFGV.

At 1–12 the chain is on the peroxisomal side; it reads MARTGLQRHRGK. Residues 13-33 form a helical membrane-spanning segment; it reads LLGTGAVLGGLVVAGVVAAVA. The Cytoplasmic portion of the chain corresponds to 34–446; it reads AKRWVRRQQQ…SASVYSNFGV (413 aa). The segment at 101-122 is disordered; sequence RAGEDDEQGSGGHASAGEGSVS.

This sequence belongs to the peroxin-3 family.

It is found in the peroxisome membrane. In terms of biological role, involved in peroxisome biosynthesis. The protein is Peroxisomal biogenesis factor 3 (PEX3) of Eremothecium gossypii (strain ATCC 10895 / CBS 109.51 / FGSC 9923 / NRRL Y-1056) (Yeast).